The primary structure comprises 100 residues: Large ribosomal subunit protein uL23 (100 aa).

The protein belongs to the universal ribosomal protein uL23 family. Part of the 50S ribosomal subunit. Contacts protein L29, and trigger factor when it is bound to the ribosome.

In terms of biological role, one of the early assembly proteins it binds 23S rRNA. One of the proteins that surrounds the polypeptide exit tunnel on the outside of the ribosome. Forms the main docking site for trigger factor binding to the ribosome. The protein is Large ribosomal subunit protein uL23 of Shewanella piezotolerans (strain WP3 / JCM 13877).